The chain runs to 661 residues: mRNA 3'-end-processing protein RNA14 (661 aa).

The segment at 1-29 (MSDGTATPDPLPSSSNTSTSLRPTSRVRD) is disordered. Low complexity predominate over residues 12 to 24 (PSSSNTSTSLRPT). 6 HAT repeats span residues 62-94 (KQWKQVYETFDKLHDRFPLMANIWCMRLSLEFD), 99-133 (LDAAVIEPVLARCLSKELGNNDLSLWLSYITYVRK), 143-179 (EARNIVIQAFQVVVDKCAIFEPKSIQFWNEYLHFLEH), 190-223 (QRVQYIRKLYKTLLCQPMDCLESMWQRYTQWEQD), 264-296 (TLNQATESNLPKPNEYDVQQLLIWLEWIRWESD), and 305-337 (LHKARMTYVYMQAAQHVCFAPEIWFNMANYQGE).

It is found in the nucleus. It localises to the cytoplasm. Functionally, component of the cleavage factor IA (CFIA) complex, which is involved in the endonucleolytic cleavage during polyadenylation-dependent pre-mRNA 3'-end formation. The chain is mRNA 3'-end-processing protein RNA14 (RNA14) from Kluyveromyces lactis (strain ATCC 8585 / CBS 2359 / DSM 70799 / NBRC 1267 / NRRL Y-1140 / WM37) (Yeast).